The following is a 315-amino-acid chain: Aldo-keto reductase family 4 member C11 (315 aa).

A2 bears the N-acetylalanine mark. NADP(+) is bound by residues 23-24 and D47; that span reads TW. The active-site Proton donor is Y52. Residues H114, 158–159, Q180, 207–213, 256–258, and 262–266 contribute to the NADP(+) site; these read SN, SPLGSPG, KST, and RIREN. A Phosphoserine modification is found at S295.

Belongs to the aldo/keto reductase family.

Functionally, oxidoreductase that may act on a broad range of substrates such as ketosteroids, aldehydes, ketones and sugars. In Arabidopsis thaliana (Mouse-ear cress), this protein is Aldo-keto reductase family 4 member C11 (AKR4C11).